A 282-amino-acid polypeptide reads, in one-letter code: Para-Rep C2 (282 aa).

The region spanning Met-1 to Pro-99 is the CRESS-DNA virus Rep endonuclease domain. Positions Cys-7 to Leu-10 match the RCR-1 motif. The a divalent metal cation site is built by Glu-38 and His-47. An RCR-2 motif is present at residues His-47–Gln-49. Residues Lys-56–Lys-77 carry the Nuclear localization signal motif. Tyr-86 (for DNA cleavage activity) is an active-site residue. Positions Tyr-86–Lys-89 match the RCR-3 motif. A Nuclear localization signal motif is present at residues Pro-99–Asn-105. ATP is bound at residue Gly-174–Ser-182.

This sequence belongs to the nanoviridea/circoviridae replication-associated protein family. In terms of assembly, homooligomer (Potential). Rep binds to repeated DNA motifs (iterons). Mg(2+) is required as a cofactor. It depends on Mn(2+) as a cofactor.

It localises to the host nucleus. The enzyme catalyses ATP + H2O = ADP + phosphate + H(+). Its function is as follows. Initiates and terminates the replication only of its own subviral DNA molecule. The closed circular ssDNA genome is first converted to a superhelical dsDNA. Rep binds a specific hairpin at the genome origin of replication. Introduces an endonucleolytic nick within the intergenic region of the genome, thereby initiating the rolling circle replication (RCR). Following cleavage, binds covalently to the 5'-phosphate of DNA as a tyrosyl ester. The cleavage gives rise to a free 3'-OH that serves as a primer for the cellular DNA polymerase. The polymerase synthesizes the (+) strand DNA by rolling circle mechanism. After one round of replication, a Rep-catalyzed nucleotidyl transfer reaction releases a circular single-stranded virus genome, thereby terminating the replication. Displays origin-specific DNA cleavage, nucleotidyl transferase, ATPase and helicase activities. In Milk vetch dwarf C2 alphasatellite (MVDC2A), this protein is Para-Rep C2 (C2).